Here is a 430-residue protein sequence, read N- to C-terminus: Glucose-1-phosphate adenylyltransferase (430 aa).

Residues glycine 163, 178–179 (EK), and serine 210 each bind alpha-D-glucose 1-phosphate.

This sequence belongs to the bacterial/plant glucose-1-phosphate adenylyltransferase family. In terms of assembly, homotetramer.

The enzyme catalyses alpha-D-glucose 1-phosphate + ATP + H(+) = ADP-alpha-D-glucose + diphosphate. Its pathway is glycan biosynthesis; glycogen biosynthesis. In terms of biological role, involved in the biosynthesis of ADP-glucose, a building block required for the elongation reactions to produce glycogen. Catalyzes the reaction between ATP and alpha-D-glucose 1-phosphate (G1P) to produce pyrophosphate and ADP-Glc. This Synechococcus elongatus (strain ATCC 33912 / PCC 7942 / FACHB-805) (Anacystis nidulans R2) protein is Glucose-1-phosphate adenylyltransferase.